The following is a 24-amino-acid chain: Lactadherin (24 aa).

The protein resides in the membrane. It is found in the secreted. It localises to the cytoplasmic vesicle. Its subcellular location is the secretory vesicle. The protein localises to the acrosome membrane. In terms of biological role, specific ligand for the alpha-v/beta-3 and alpha-v/beta-5 receptors. Also binds to phosphatidylserine-enriched cell surfaces in a receptor-independent manner. Zona pellucida-binding protein which may play a role in gamete interaction. Contributes to phagocytic removal of apoptotic cells in many tissues. Plays an important role in the maintenance of intestinal epithelial homeostasis and the promotion of mucosal healing. Promotes VEGF-dependent neovascularization. In Equus asinus (Donkey), this protein is Lactadherin.